The chain runs to 32 residues: uncharacterized protein (32 aa).

This is an uncharacterized protein from Saccharolobus islandicus (Sulfolobus islandicus).